The chain runs to 218 residues: Elongation factor Ts (218 aa).

Positions 82 to 85 (TDFV) are involved in Mg(2+) ion dislocation from EF-Tu.

It belongs to the EF-Ts family.

The protein resides in the cytoplasm. Its function is as follows. Associates with the EF-Tu.GDP complex and induces the exchange of GDP to GTP. It remains bound to the aminoacyl-tRNA.EF-Tu.GTP complex up to the GTP hydrolysis stage on the ribosome. The sequence is that of Elongation factor Ts (tsf) from Synechocystis sp. (strain ATCC 27184 / PCC 6803 / Kazusa).